The primary structure comprises 410 residues: Argininosuccinate synthase (410 aa).

10–18 lines the ATP pocket; it reads AYSGGLDTS. L-citrulline contacts are provided by Tyr-88 and Ser-93. Residue Gly-118 participates in ATP binding. Residues Thr-120, Asn-124, and Asp-125 each contribute to the L-aspartate site. Asn-124 contacts L-citrulline. Residues Arg-128, Ser-177, Ser-186, Glu-262, and Tyr-274 each contribute to the L-citrulline site.

It belongs to the argininosuccinate synthase family. Type 1 subfamily. Homotetramer.

Its subcellular location is the cytoplasm. It catalyses the reaction L-citrulline + L-aspartate + ATP = 2-(N(omega)-L-arginino)succinate + AMP + diphosphate + H(+). It participates in amino-acid biosynthesis; L-arginine biosynthesis; L-arginine from L-ornithine and carbamoyl phosphate: step 2/3. The protein is Argininosuccinate synthase of Thermoanaerobacter pseudethanolicus (strain ATCC 33223 / 39E) (Clostridium thermohydrosulfuricum).